The following is a 560-amino-acid chain: Dihydroxy-acid dehydratase (560 aa).

C50 provides a ligand contact to [2Fe-2S] cluster. Residue D82 participates in Mg(2+) binding. C123 serves as a coordination point for [2Fe-2S] cluster. The Mg(2+) site is built by D124 and K125. Residue K125 is modified to N6-carboxylysine. [2Fe-2S] cluster is bound at residue C195. E447 serves as a coordination point for Mg(2+). S473 functions as the Proton acceptor in the catalytic mechanism.

It belongs to the IlvD/Edd family. Homodimer. [2Fe-2S] cluster is required as a cofactor. Mg(2+) serves as cofactor.

The enzyme catalyses (2R)-2,3-dihydroxy-3-methylbutanoate = 3-methyl-2-oxobutanoate + H2O. It catalyses the reaction (2R,3R)-2,3-dihydroxy-3-methylpentanoate = (S)-3-methyl-2-oxopentanoate + H2O. It functions in the pathway amino-acid biosynthesis; L-isoleucine biosynthesis; L-isoleucine from 2-oxobutanoate: step 3/4. It participates in amino-acid biosynthesis; L-valine biosynthesis; L-valine from pyruvate: step 3/4. Its function is as follows. Functions in the biosynthesis of branched-chain amino acids. Catalyzes the dehydration of (2R,3R)-2,3-dihydroxy-3-methylpentanoate (2,3-dihydroxy-3-methylvalerate) into 2-oxo-3-methylpentanoate (2-oxo-3-methylvalerate) and of (2R)-2,3-dihydroxy-3-methylbutanoate (2,3-dihydroxyisovalerate) into 2-oxo-3-methylbutanoate (2-oxoisovalerate), the penultimate precursor to L-isoleucine and L-valine, respectively. In Methylibium petroleiphilum (strain ATCC BAA-1232 / LMG 22953 / PM1), this protein is Dihydroxy-acid dehydratase.